A 150-amino-acid polypeptide reads, in one-letter code: uncharacterized protein (150 aa).

Residues 3-145 (VAILSGSVYG…DAEPWLAEFA (143 aa)) form the Flavodoxin-like domain.

It belongs to the flavodoxin family. MioC subfamily. The cofactor is FMN.

In terms of biological role, probable electron transporter. This is an uncharacterized protein from Pseudomonas aeruginosa (strain ATCC 15692 / DSM 22644 / CIP 104116 / JCM 14847 / LMG 12228 / 1C / PRS 101 / PAO1).